The following is a 166-amino-acid chain: NADH-quinone oxidoreductase subunit I (166 aa).

4Fe-4S ferredoxin-type domains lie at 57–87 and 97–126; these read LRRYPNGEERCIACKLCEAVCPALAITIESE and TRYDIDMFKCINCGLCEESCPVDSIVVTPI. The [4Fe-4S] cluster site is built by C67, C70, C73, C77, C106, C109, C112, and C116.

It belongs to the complex I 23 kDa subunit family. As to quaternary structure, NDH-1 is composed of 14 different subunits. Subunits NuoA, H, J, K, L, M, N constitute the membrane sector of the complex. The cofactor is [4Fe-4S] cluster.

The protein resides in the cell inner membrane. The catalysed reaction is a quinone + NADH + 5 H(+)(in) = a quinol + NAD(+) + 4 H(+)(out). Functionally, NDH-1 shuttles electrons from NADH, via FMN and iron-sulfur (Fe-S) centers, to quinones in the respiratory chain. The immediate electron acceptor for the enzyme in this species is believed to be ubiquinone. Couples the redox reaction to proton translocation (for every two electrons transferred, four hydrogen ions are translocated across the cytoplasmic membrane), and thus conserves the redox energy in a proton gradient. The polypeptide is NADH-quinone oxidoreductase subunit I (Legionella pneumophila (strain Paris)).